Reading from the N-terminus, the 298-residue chain is Protein REVEILLE 8 (298 aa).

The interval 1–44 (MSSSPSRNPTNAEAPPPPPTSTDAVAEGSSKKVRKPYTITKSRE) is disordered. Residues 38-92 (TITKSRESWTEEEHDKFLEALQLFDRDWKKIEDFVGSKTVIQIRSHAQKYFLKVQ) form the HTH myb-type domain. The H-T-H motif DNA-binding region spans 65–88 (WKKIEDFVGSKTVIQIRSHAQKYF). The interval 96-123 (TLAHVPPPRPKRKAAHPYPQKASKNAQM) is disordered.

It localises to the nucleus. Transcriptional activator of evening element (EE)-containing clock-controlled genes. Forms a negative feedback loop with APRR5. Regulates the pattern of histone H3 acetylation of the TOC1 promoter. RVE4, RVE6 and RVE8 are components of the circadian system acting synergistically to regulate flowering time, redundantly to regulate leaf growth, and antagonistically to regulate hypocotyl elongation; their action seems independent of ZTL and HY5. In Arabidopsis thaliana (Mouse-ear cress), this protein is Protein REVEILLE 8.